We begin with the raw amino-acid sequence, 362 residues long: Peptide chain release factor 1 (362 aa).

Glutamine 237 carries the N5-methylglutamine modification.

The protein belongs to the prokaryotic/mitochondrial release factor family. Methylated by PrmC. Methylation increases the termination efficiency of RF1.

Its subcellular location is the cytoplasm. Its function is as follows. Peptide chain release factor 1 directs the termination of translation in response to the peptide chain termination codons UAG and UAA. This Vibrio campbellii (strain ATCC BAA-1116) protein is Peptide chain release factor 1.